The sequence spans 347 residues: Dual specificity mitogen-activated protein kinase kinase 3 (347 aa).

Methionine 1 carries the post-translational modification N-acetylmethionine. Pro residues predominate over residues methionine 1–serine 11. The segment at methionine 1–aspartate 45 is disordered. Position 3 is a phosphoserine (serine 3). One can recognise a Protein kinase domain in the interval leucine 64 to phenylalanine 325. ATP is bound by residues leucine 70–valine 78 and lysine 93. Residue aspartate 190 is the Proton acceptor of the active site. The residue at position 218 (serine 218) is a Phosphoserine. Threonine 222 bears the Phosphothreonine mark.

The protein belongs to the protein kinase superfamily. STE Ser/Thr protein kinase family. MAP kinase kinase subfamily. Component of a signaling complex containing at least AKAP13, PKN1, MAPK14, ZAK and MAP2K3. Within this complex, AKAP13 interacts directly with PKN1, which in turn recruits MAPK14, MAP2K3 and ZAK. Binds to DYRK1B/MIRK and increases its kinase activity. Part of a complex with MAP3K3, RAC1 and CCM2. Interacts with ARRB1. Autophosphorylated. Phosphorylation on Ser-218 and Thr-222 by MAP kinase kinase kinases positively regulates the kinase activity. Phosphorylated by TAOK2.

The enzyme catalyses L-seryl-[protein] + ATP = O-phospho-L-seryl-[protein] + ADP + H(+). The catalysed reaction is L-threonyl-[protein] + ATP = O-phospho-L-threonyl-[protein] + ADP + H(+). It catalyses the reaction L-tyrosyl-[protein] + ATP = O-phospho-L-tyrosyl-[protein] + ADP + H(+). Activated by dual phosphorylation on Ser-218 and Thr-222. Dual specificity kinase. Is activated by cytokines and environmental stress in vivo. Catalyzes the concomitant phosphorylation of a threonine and a tyrosine residue in the MAP kinase p38. Part of a signaling cascade that begins with the activation of the adrenergic receptor ADRA1B and leads to the activation of MAPK14. The polypeptide is Dual specificity mitogen-activated protein kinase kinase 3 (Map2k3) (Mus musculus (Mouse)).